The following is a 396-amino-acid chain: Ribosomal RNA large subunit methyltransferase I (396 aa).

The region spanning 2–79 (AVRIKLKPGR…REEEIDREFF (78 aa)) is the PUA domain.

Belongs to the methyltransferase superfamily. RlmI family.

It is found in the cytoplasm. The enzyme catalyses cytidine(1962) in 23S rRNA + S-adenosyl-L-methionine = 5-methylcytidine(1962) in 23S rRNA + S-adenosyl-L-homocysteine + H(+). Functionally, specifically methylates the cytosine at position 1962 (m5C1962) of 23S rRNA. In Shewanella sp. (strain ANA-3), this protein is Ribosomal RNA large subunit methyltransferase I.